The primary structure comprises 58 residues: Preprotein translocase subunit SecG (58 aa).

Over 1–32 the chain is Cytoplasmic; that stretch reads MARKRRKGGEGLVTAIGLVRFYEEVEEKIKVP. Residues 33–54 traverse the membrane as a helical segment; sequence PEAVIGAAFALSIMTIALDLLL. The Extracellular segment spans residues 55-58; that stretch reads KAAR.

This sequence belongs to the SEC61-beta family. Component of the protein translocase complex. Heterotrimer consisting of alpha (SecY), beta (SecG) and gamma (SecE) subunits. Can form oligomers of the heterotrimer.

It localises to the cell membrane. Involved in protein export. The function of the beta subunit is unknown, but it may be involved in stabilization of the trimeric complex. This Ignicoccus hospitalis (strain KIN4/I / DSM 18386 / JCM 14125) protein is Preprotein translocase subunit SecG.